The primary structure comprises 247 residues: Adenosylcobinamide-GDP ribazoletransferase (247 aa).

5 helical membrane-spanning segments follow: residues 34 to 54 (IITF…VFMV), 57 to 77 (AWCG…LMTG), 113 to 133 (GGLA…ELAL), 138 to 158 (ILAS…LLMY), and 194 to 214 (VLLL…AIFI).

Belongs to the CobS family. Requires Mg(2+) as cofactor.

The protein resides in the cell inner membrane. The catalysed reaction is alpha-ribazole + adenosylcob(III)inamide-GDP = adenosylcob(III)alamin + GMP + H(+). The enzyme catalyses alpha-ribazole 5'-phosphate + adenosylcob(III)inamide-GDP = adenosylcob(III)alamin 5'-phosphate + GMP + H(+). It functions in the pathway cofactor biosynthesis; adenosylcobalamin biosynthesis; adenosylcobalamin from cob(II)yrinate a,c-diamide: step 7/7. In terms of biological role, joins adenosylcobinamide-GDP and alpha-ribazole to generate adenosylcobalamin (Ado-cobalamin). Also synthesizes adenosylcobalamin 5'-phosphate from adenosylcobinamide-GDP and alpha-ribazole 5'-phosphate. In Shigella flexneri, this protein is Adenosylcobinamide-GDP ribazoletransferase.